The primary structure comprises 1835 residues: AT-rich interactive domain-containing protein 2 (1835 aa).

A2 is modified (N-acetylalanine). A Phosphoserine modification is found at S4. Glycyl lysine isopeptide (Lys-Gly) (interchain with G-Cter in SUMO2) cross-links involve residues K7, K15, and K119. An ARID domain is found at 13–105; that stretch reads RRKGLAFLDE…YLEKYEKVHH (93 aa). The short motif at 313–317 is the LXXLL element; it reads LRFLL. The segment at residues 524-603 is a DNA-binding region (RFX-type winged-helix); that stretch reads ACQWLNAHFE…IHVVGVKRRA (80 aa). Residue K555 forms a Glycyl lysine isopeptide (Lys-Gly) (interchain with G-Cter in SUMO2) linkage. S631 and S635 each carry phosphoserine. Position 653 is a phosphothreonine (T653). S689 carries the post-translational modification Phosphoserine. The residue at position 692 (T692) is a Phosphothreonine. 5 disordered regions span residues 819–844, 962–1057, 1266–1287, 1295–1314, and 1321–1341; these read QQLITTSPQPVQTSSQQTSAGSQSQD, LTGQ…SGES, MENPSCRRGATNTSNGDTKENE, NGRKYSDSSLPPSNSGKIQS, and LISNGPSLELGENGASGKQNS. Composition is skewed to low complexity over residues 823–843, 985–996, and 1025–1044; these read TTSPQPVQTSSQQTSAGSQSQ, PTAMSSSSTPQS, and QVQVQVQQPQQVQMQVQPQQ. The residue at position 1300 (S1300) is a Phosphoserine. Residues 1301–1314 are compositionally biased toward polar residues; it reads DSSLPPSNSGKIQS. 2 positions are modified to phosphoserine: S1391 and S1496. Disordered regions lie at residues 1488 to 1522 and 1572 to 1629; these read DSGSKVSHSPALSSDVRSTNGTAECKTVKRPAEDT and SAVQ…RKPG. Residues 1491–1509 show a composition bias toward polar residues; sequence SKVSHSPALSSDVRSTNGT. Residues 1513–1522 are compositionally biased toward basic and acidic residues; the sequence is KTVKRPAEDT. Positions 1573–1592 are enriched in polar residues; sequence AVQQKQQHPPTYVQNVVPQN. A compositionally biased stretch (low complexity) spans 1602–1623; the sequence is QVQGQPNSSQPSPFSGSSQPGD. The C2H2-type zinc-finger motif lies at 1632-1657; sequence FMCLWQSCKKWFQTPSQVFYHAATEH. Residues K1701, K1716, and K1731 each participate in a glycyl lysine isopeptide (Lys-Gly) (interchain with G-Cter in SUMO2) cross-link. The tract at residues 1703 to 1728 is disordered; that stretch reads DEPGQAGSQKSSTKQPTVGGTSSTPR. Residues 1708–1728 are compositionally biased toward polar residues; it reads AGSQKSSTKQPTVGGTSSTPR.

Component of the SWI/SNF-B (PBAF) chromatin remodeling complex, at least composed of SMARCA4/BRG1, SMARCB1/BAF47/SNF5, ACTL6A/BAF53A or ACTL6B/BAF53B, SMARCE1/BAF57, SMARCD1/BAF60A, SMARCD2/BAF60B, perhaps SMARCD3/BAF60C, SMARCC1/BAF155, SMARCC2/BAF170, PBRM1/BAF180, ARID2/BAF200 and actin. Interacts with SRF. Forms complexes with SRF and SRF cofactors MYOCD, NKX2-5 and SRFBP1. Highly expressed in heart.

The protein resides in the nucleus. Its function is as follows. Involved in transcriptional activation and repression of select genes by chromatin remodeling (alteration of DNA-nucleosome topology). Required for the stability of the SWI/SNF chromatin remodeling complex SWI/SNF-B (PBAF). May be involved in targeting the complex to different genes. May be involved in regulating transcriptional activation of cardiac genes. The sequence is that of AT-rich interactive domain-containing protein 2 from Homo sapiens (Human).